The sequence spans 369 residues: uncharacterized protein (369 aa).

N6-(pyridoxal phosphate)lysine is present on K184.

This sequence belongs to the class-V pyridoxal-phosphate-dependent aminotransferase family. Pyridoxal 5'-phosphate serves as cofactor.

This is an uncharacterized protein from Helicobacter pylori (strain J99 / ATCC 700824) (Campylobacter pylori J99).